The primary structure comprises 334 residues: N-acetyl-gamma-glutamyl-phosphate reductase (334 aa).

Residue C154 is part of the active site.

The protein belongs to the NAGSA dehydrogenase family. Type 1 subfamily.

It is found in the cytoplasm. It catalyses the reaction N-acetyl-L-glutamate 5-semialdehyde + phosphate + NADP(+) = N-acetyl-L-glutamyl 5-phosphate + NADPH + H(+). It functions in the pathway amino-acid biosynthesis; L-arginine biosynthesis; N(2)-acetyl-L-ornithine from L-glutamate: step 3/4. Its function is as follows. Catalyzes the NADPH-dependent reduction of N-acetyl-5-glutamyl phosphate to yield N-acetyl-L-glutamate 5-semialdehyde. In Salmonella typhi, this protein is N-acetyl-gamma-glutamyl-phosphate reductase.